A 461-amino-acid polypeptide reads, in one-letter code: Kynurenine 3-monooxygenase (461 aa).

FAD-binding positions include 17 to 18, 37 to 39, and A56; these read LA and ERR. 2 residues coordinate L-kynurenine: R84 and Y98. Residues R111, L135, D311, and 324-325 each bind FAD; that span reads MN. Residues N369 and Y404 each contribute to the L-kynurenine site.

Belongs to the aromatic-ring hydroxylase family. KMO subfamily. The cofactor is FAD.

The enzyme catalyses L-kynurenine + NADPH + O2 + H(+) = 3-hydroxy-L-kynurenine + NADP(+) + H2O. It participates in cofactor biosynthesis; NAD(+) biosynthesis; quinolinate from L-kynurenine: step 1/3. It functions in the pathway siderophore biosynthesis; quinolobactin biosynthesis. Its function is as follows. Catalyzes the hydroxylation of L-kynurenine (L-Kyn) to form 3-hydroxy-L-kynurenine (L-3OHKyn). Probably required for the synthesis of quinolinic acid and the siderophore quinolobactin. This chain is Kynurenine 3-monooxygenase, found in Pseudomonas fluorescens.